The chain runs to 296 residues: MMLPLQGAQMLQMLEKSLRKSLPASLKVYGTVFHINHGNPFNLKAVVDKWPDFNTVVVCPQEQDMTDDLDHYTNTYQIYSKDPQNCQEFLGSPELINWKQHLQIQSSQPSLNEAIQNLAAIKSFKVKQTQRILYMAAETAKELTPFLLKSKILSPNGGKPKAINQEMFKLSSMDVTHAHLVNKFWHFGGNERSQRFIERCIQTFPTCCLLGPEGTPVCWDLMDQTGEMRMAGTLPEYRLHGLVTYVIYSHAQKLGKLGFPVYSHVDYSNEAMQKMSYTLQHVPIPRSWNQWNCVPL.

3 positions are modified to N6-acetyllysine; alternate: lysine 16, lysine 127, and lysine 141. Residues lysine 16, lysine 127, and lysine 141 each carry the N6-succinyllysine; alternate modification. Lysine 159 bears the N6-acetyllysine mark. Lysine 169 carries the post-translational modification N6-succinyllysine. An N6-acetyllysine; alternate mark is found at lysine 183 and lysine 256. Lysine 183 and lysine 256 each carry N6-succinyllysine; alternate.

The protein belongs to the glycine N-acyltransferase family. In terms of tissue distribution, predominantly expressed in liver (at protein level) and kidney. Down-regulated in hepatocellular carcinoma and other liver cancers.

The protein localises to the mitochondrion. It carries out the reaction an acyl-CoA + glycine = an N-acylglycine + CoA + H(+). The catalysed reaction is benzoyl-CoA + glycine = N-benzoylglycine + CoA + H(+). Its function is as follows. Mitochondrial acyltransferase which transfers an acyl group to the N-terminus of glycine and glutamine, although much less efficiently. Can conjugate numerous substrates to form a variety of N-acylglycines, with a preference for benzoyl-CoA over phenylacetyl-CoA as acyl donors. Thereby detoxify xenobiotics, such as benzoic acid or salicylic acid, and endogenous organic acids, such as isovaleric acid. The polypeptide is Glycine N-acyltransferase (GLYAT) (Homo sapiens (Human)).